The sequence spans 67 residues: Small ribosomal subunit protein eS27 (67 aa).

Zn(2+)-binding residues include Cys-22, Cys-25, Cys-41, and Cys-44. The C4-type zinc-finger motif lies at 22–44 (CPDCGNEQVTFSHAAMVVRCLVC).

This sequence belongs to the eukaryotic ribosomal protein eS27 family. In terms of assembly, part of the 30S ribosomal subunit. Requires Zn(2+) as cofactor.

This is Small ribosomal subunit protein eS27 from Pyrobaculum calidifontis (strain DSM 21063 / JCM 11548 / VA1).